The chain runs to 486 residues: Small ribosomal subunit protein uS17B (486 aa).

A 30S ribosomal protein S17 region spans residues 1-112 (MRDIGINGIK…IENKSNINFV (112 aa)). Residues 113–486 (DNLLNVDDKW…ELWTRKNYKS (374 aa)) are unknown.

This sequence belongs to the universal ribosomal protein uS17 family. In terms of assembly, part of the 30S ribosomal subunit.

Its function is as follows. One of the primary rRNA binding proteins, it binds specifically to the 5'-end of 16S ribosomal RNA. This is Small ribosomal subunit protein uS17B from Methanosarcina acetivorans (strain ATCC 35395 / DSM 2834 / JCM 12185 / C2A).